The chain runs to 293 residues: Ribosomal protein L11 methyltransferase (293 aa).

The S-adenosyl-L-methionine site is built by Thr-145, Gly-166, Asp-188, and Asn-229.

It belongs to the methyltransferase superfamily. PrmA family.

The protein resides in the cytoplasm. The enzyme catalyses L-lysyl-[protein] + 3 S-adenosyl-L-methionine = N(6),N(6),N(6)-trimethyl-L-lysyl-[protein] + 3 S-adenosyl-L-homocysteine + 3 H(+). Methylates ribosomal protein L11. This Halorhodospira halophila (strain DSM 244 / SL1) (Ectothiorhodospira halophila (strain DSM 244 / SL1)) protein is Ribosomal protein L11 methyltransferase.